The following is a 284-amino-acid chain: 4-hydroxybenzoate octaprenyltransferase (284 aa).

9 helical membrane passes run 19-39, 42-62, 85-105, 107-127, 134-154, 165-185, 211-231, 233-253, and 261-281; these read IPIL…SHGL, ISYL…GCII, GQLS…VAFI, VLFL…LAIL, FFAI…FMAF, AWIF…IYAL, ILLF…YCDF, SFFY…YFLY, and CINA…IAVI.

It belongs to the UbiA prenyltransferase family. Requires Mg(2+) as cofactor.

It is found in the cell inner membrane. It catalyses the reaction all-trans-octaprenyl diphosphate + 4-hydroxybenzoate = 4-hydroxy-3-(all-trans-octaprenyl)benzoate + diphosphate. It functions in the pathway cofactor biosynthesis; ubiquinone biosynthesis. Its function is as follows. Catalyzes the prenylation of para-hydroxybenzoate (PHB) with an all-trans polyprenyl group. Mediates the second step in the final reaction sequence of ubiquinone-8 (UQ-8) biosynthesis, which is the condensation of the polyisoprenoid side chain with PHB, generating the first membrane-bound Q intermediate 3-octaprenyl-4-hydroxybenzoate. The sequence is that of 4-hydroxybenzoate octaprenyltransferase from Francisella tularensis subsp. holarctica (strain LVS).